The chain runs to 341 residues: NADH-ubiquinone oxidoreductase chain 2 (341 aa).

8 consecutive transmembrane segments (helical) span residues 8 to 28 (IFFIMLISGTLITISSNSWLG), 61 to 81 (FLTQAFASSILLFAIILMMMF), 95 to 117 (LLILSTLLLKSGAAPFHFWFPGV), 145 to 165 (LNINFFYFTILLSMIIGALGG), 195 to 215 (LLWLTYFLLYSILSMSIILMF), 238 to 258 (FFMFLNLLSLGGLPPFLGFLP), 266 to 286 (LVEMNQLFLLFIAVCLTLITL), and 320 to 340 (ILTMNFISIMGLLIITLIYLI).

It belongs to the complex I subunit 2 family.

Its subcellular location is the mitochondrion inner membrane. The catalysed reaction is a ubiquinone + NADH + 5 H(+)(in) = a ubiquinol + NAD(+) + 4 H(+)(out). Core subunit of the mitochondrial membrane respiratory chain NADH dehydrogenase (Complex I) that is believed to belong to the minimal assembly required for catalysis. Complex I functions in the transfer of electrons from NADH to the respiratory chain. The immediate electron acceptor for the enzyme is believed to be ubiquinone. This is NADH-ubiquinone oxidoreductase chain 2 from Aedes aegypti (Yellowfever mosquito).